A 725-amino-acid chain; its full sequence is Beta-adducin (725 aa).

Positions 1-22 (MSEDTVPEAASPPPSQGQHYFD) are disordered. A phosphoserine mark is found at Ser-11 and Ser-25. Thr-55 carries the phosphothreonine modification. Residues Ser-60 and Ser-344 each carry the phosphoserine modification. An interaction with calmodulin region spans residues 425 to 444 (KQQKEKTRWLNTPNTYLRVN). The tract at residues 525 to 725 (AEKSRSPSTE…KSKKKEKVES (201 aa)) is disordered. 2 positions are modified to phosphoserine: Ser-530 and Ser-532. At Thr-533 the chain carries Phosphothreonine. Ser-535 bears the Phosphoserine mark. At Thr-561 the chain carries Phosphothreonine. Basic and acidic residues predominate over residues 566–589 (EEYKKEVERKKLEQEQEGEKDIAT). Phosphoserine is present on residues Ser-594, Ser-598, Ser-602, and Ser-606. Residues 596 to 621 (VKSTPASPVQSPSKAGTKSPAVSPSK) show a composition bias toward polar residues. A Phosphothreonine modification is found at Thr-612. Phosphoserine is present on residues Ser-614, Ser-618, and Ser-620. Positions 622 to 631 (TSEDTKKTEV) are enriched in basic and acidic residues. A Phosphothreonine modification is found at Thr-674. 9 positions are modified to phosphoserine: Ser-678, Ser-685, Ser-688, Ser-692, Ser-696, Ser-698, Ser-700, Ser-702, and Ser-712. Residues 687–700 (TSGPLSPEGSPSKS) show a composition bias toward low complexity. The segment covering 701 to 725 (PSKKKKKFRTPSFLKKSKKKEKVES) has biased composition (basic residues). The interval 703–720 (KKKKKFRTPSFLKKSKKK) is interaction with calmodulin.

It belongs to the aldolase class II family. Adducin subfamily. In terms of assembly, found in a complex with ADD2, DMTN and SLC2A1. Interacts with SLC2A1. Heterodimer of an alpha and a beta subunit.

Its subcellular location is the cytoplasm. It is found in the cytoskeleton. The protein localises to the cell membrane. In terms of biological role, membrane-cytoskeleton-associated protein that promotes the assembly of the spectrin-actin network. Binds to the erythrocyte membrane receptor SLC2A1/GLUT1 and may therefore provide a link between the spectrin cytoskeleton to the plasma membrane. Binds to calmodulin. Calmodulin binds preferentially to the beta subunit. The protein is Beta-adducin (Add2) of Mus musculus (Mouse).